Consider the following 677-residue polypeptide: High-affinity choline transport protein (677 aa).

Transmembrane regions (helical) follow at residues Pro15 to Phe35, Phe54 to Cys74, Leu94 to Val114, Phe144 to Phe164, Ile196 to Gln216, Ala233 to Val253, Val265 to Leu285, Trp319 to Ala339, Phe350 to Gly370, Val412 to Leu432, Val452 to Ser472, and Thr477 to Tyr497.

The protein belongs to the BCCT transporter (TC 2.A.15) family.

The protein resides in the cell inner membrane. It carries out the reaction choline(in) + H(+)(in) = choline(out) + H(+)(out). The protein operates within amine and polyamine biosynthesis; betaine biosynthesis via choline pathway. Its function is as follows. High-affinity uptake of choline driven by a proton-motive force. This chain is High-affinity choline transport protein (betT), found in Escherichia coli O157:H7.